Reading from the N-terminus, the 481-residue chain is Zinc metalloproteinase/disintegrin (481 aa).

Residues 1–20 (MIQVLLVTICLAVFPYQGSS) form the signal peptide. Residues 21 to 190 (IILESGNVDD…KASQLYLTPE (170 aa)) constitute a propeptide that is removed on maturation. Positions 197–392 (RYIKLAIVVD…DNPQCILNAP (196 aa)) constitute a Peptidase M12B domain. 3 disulfides stabilise this stretch: cysteine 308-cysteine 387, cysteine 349-cysteine 371, and cysteine 351-cysteine 354. Histidine 333 is a binding site for Zn(2+). Glutamate 334 is a catalytic residue. Positions 337 and 343 each coordinate Zn(2+). The propeptide occupies 393 to 408 (LRTDTVSTPVSGNEFL). In terms of domain architecture, Disintegrin spans 400 to 481 (TPVSGNEFLE…ADCPRNGLYS (82 aa)). Intrachain disulfides connect cysteine 414–cysteine 429, cysteine 416–cysteine 424, cysteine 423–cysteine 446, cysteine 437–cysteine 443, cysteine 442–cysteine 467, and cysteine 455–cysteine 474. A Cell attachment site motif is present at residues 459-461 (RGD).

Belongs to the venom metalloproteinase (M12B) family. P-II subfamily. P-IIa sub-subfamily. In terms of assembly, monomer. Zn(2+) is required as a cofactor. As to expression, expressed by the venom gland.

It localises to the secreted. Functionally, impairs hemostasis in the envenomed animal. In terms of biological role, inhibits platelet aggregation induced by ADP, thrombin, platelet-activating factor and collagen. Acts by inhibiting fibrinogen interaction with platelet receptors GPIIb/GPIIIa (ITGA2B/ITGB3). The sequence is that of Zinc metalloproteinase/disintegrin from Protobothrops elegans (Elegant pitviper).